A 109-amino-acid chain; its full sequence is Elongin-C (109 aa).

Belongs to the SKP1 family.

It is found in the nucleus. Its function is as follows. SIII, also known as elongin, is a general transcription elongation factor that increases the RNA polymerase II transcription elongation past template-encoded arresting sites. Subunit A is transcriptionally active and its transcription activity is strongly enhanced by binding to the dimeric complex of the SIII regulatory subunits B and C (elongin BC complex). The elongin BC complex seems to be involved as an adapter protein in the proteasomal degradation of target proteins via different E3 ubiquitin ligase complexes. The polypeptide is Elongin-C (tceb1) (Dictyostelium discoideum (Social amoeba)).